The sequence spans 511 residues: Probable lipid II flippase MurJ (511 aa).

13 helical membrane passes run 31 to 51, 90 to 110, 130 to 150, 159 to 179, 182 to 202, 237 to 257, 271 to 291, 314 to 334, 354 to 374, 383 to 403, 407 to 427, 443 to 463, and 481 to 501; these read IFGA…PNLL, LLTL…PWVI, LLKI…VGAI, IPAF…LFAA, FNPP…LQLV, ILGV…ASFL, LMEF…LPSL, CFLL…PLTV, LIAY…APGF, PVKI…AFIG, HAGL…LLYW, AFLL…LGML, and LMAV…VLGF.

This sequence belongs to the MurJ/MviN family.

It localises to the cell inner membrane. It participates in cell wall biogenesis; peptidoglycan biosynthesis. Functionally, involved in peptidoglycan biosynthesis. Transports lipid-linked peptidoglycan precursors from the inner to the outer leaflet of the cytoplasmic membrane. The protein is Probable lipid II flippase MurJ of Escherichia coli O157:H7.